The following is a 210-amino-acid chain: Cytidylate kinase (210 aa).

Gly9 to Thr17 serves as a coordination point for ATP.

The protein belongs to the cytidylate kinase family. Type 1 subfamily.

The protein localises to the cytoplasm. It catalyses the reaction CMP + ATP = CDP + ADP. It carries out the reaction dCMP + ATP = dCDP + ADP. The protein is Cytidylate kinase of Agrobacterium fabrum (strain C58 / ATCC 33970) (Agrobacterium tumefaciens (strain C58)).